The following is a 229-amino-acid chain: Uracil-DNA glycosylase (229 aa).

Asp-67 acts as the Proton acceptor in catalysis.

Belongs to the uracil-DNA glycosylase (UDG) superfamily. UNG family.

The protein resides in the cytoplasm. The enzyme catalyses Hydrolyzes single-stranded DNA or mismatched double-stranded DNA and polynucleotides, releasing free uracil.. Excises uracil residues from the DNA which can arise as a result of misincorporation of dUMP residues by DNA polymerase or due to deamination of cytosine. The protein is Uracil-DNA glycosylase of Coxiella burnetii (strain CbuK_Q154) (Coxiella burnetii (strain Q154)).